Here is a 468-residue protein sequence, read N- to C-terminus: MWLPNLVRFVAVAYLICAGAILTYASGASASSSQSTPATPTHTTPNLTTAHGAGSDNTTNANGTESTHSHETTITCTKSLISVPYYKSVDMNCTTSVGVNYSEYRLEIYLNQRTPFSGTPPGDEENYINHNATKDQTLLLFSTAERKKSRRGGQLGVIPDRLPKRQLFNLPLHTEGGTKFPLTIKSVDWRTAGIYVWSLYAKNGTLVNSTSVTVSTYNAPLLDLSVHPSLKGENYRATCVVASYFPHSSVKLRWYKNAREVDFTKYVTNASSVWVDGLITRISTVSIPVDPEEEYTPSLRCSIDWYRDEVSFARIAKAGTPSVFVAPTVSVSVEDGDAVCTAKCVPSTGVFVSWSVNDHLPGVPSQDMTTGVCPSHSGLVNMQSRRPLSEENGEREYSCIIEGYPDGLPMFSDTVVYDASPIVEDRPVLTSIIAVTCGAAALALVVLITAVCFYCSKPSQAPYKKSDF.

The N-terminal stretch at 1 to 30 (MWLPNLVRFVAVAYLICAGAILTYASGASA) is a signal peptide. Residues 31 to 50 (SSSQSTPATPTHTTPNLTTA) show a composition bias toward low complexity. A disordered region spans residues 31 to 73 (SSSQSTPATPTHTTPNLTTAHGAGSDNTTNANGTESTHSHETT). At 31 to 431 (SSSQSTPATP…IVEDRPVLTS (401 aa)) the chain is on the virion surface side. 9 N-linked (GlcNAc...) asparagine; by host glycosylation sites follow: Asn-46, Asn-57, Asn-62, Asn-92, Asn-100, Asn-131, Asn-203, Asn-208, and Asn-269. A disulfide bond links Cys-76 and Cys-93. Ig-like domains lie at 220–311 (PLLD…DEVS) and 321–416 (PSVF…DTVV). Cystine bridges form between Cys-239–Cys-301, Cys-340–Cys-399, and Cys-344–Cys-373. A helical membrane pass occupies residues 432–451 (IIAVTCGAAALALVVLITAV). The Cytoplasmic segment spans residues 452–468 (CFYCSKPSQAPYKKSDF).

It belongs to the herpesviridae glycoprotein C family. Interacts with host complement component C3; this interaction inhibits host immune response by disregulating complement cascade.

Its subcellular location is the virion membrane. In terms of biological role, essential for the initial attachment to heparan sulfate moieties of the host cell surface proteoglycans. Also plays a role in host immune evasion by inhibiting the host complement cascade activation. The sequence is that of Envelope glycoprotein C (gC) from Equus caballus (Horse).